Consider the following 497-residue polypeptide: GTPase-activating protein GYP8 (497 aa).

In terms of domain architecture, Rab-GAP TBC spans 69-281; sequence FVNNSLRKDC…QIFDMTISMQ (213 aa).

This Saccharomyces cerevisiae (strain ATCC 204508 / S288c) (Baker's yeast) protein is GTPase-activating protein GYP8 (GYP8).